A 291-amino-acid chain; its full sequence is Lipoyl synthase (291 aa).

[4Fe-4S] cluster is bound by residues cysteine 36, cysteine 41, cysteine 47, cysteine 62, cysteine 66, cysteine 69, and serine 275. Residues 48–264 enclose the Radical SAM core domain; the sequence is FSKKTATFLI…KEFAISIGFK (217 aa).

Belongs to the radical SAM superfamily. Lipoyl synthase family. [4Fe-4S] cluster is required as a cofactor.

The protein localises to the cytoplasm. It carries out the reaction [[Fe-S] cluster scaffold protein carrying a second [4Fe-4S](2+) cluster] + N(6)-octanoyl-L-lysyl-[protein] + 2 oxidized [2Fe-2S]-[ferredoxin] + 2 S-adenosyl-L-methionine + 4 H(+) = [[Fe-S] cluster scaffold protein] + N(6)-[(R)-dihydrolipoyl]-L-lysyl-[protein] + 4 Fe(3+) + 2 hydrogen sulfide + 2 5'-deoxyadenosine + 2 L-methionine + 2 reduced [2Fe-2S]-[ferredoxin]. It functions in the pathway protein modification; protein lipoylation via endogenous pathway; protein N(6)-(lipoyl)lysine from octanoyl-[acyl-carrier-protein]: step 2/2. Functionally, catalyzes the radical-mediated insertion of two sulfur atoms into the C-6 and C-8 positions of the octanoyl moiety bound to the lipoyl domains of lipoate-dependent enzymes, thereby converting the octanoylated domains into lipoylated derivatives. The sequence is that of Lipoyl synthase from Caldicellulosiruptor bescii (strain ATCC BAA-1888 / DSM 6725 / KCTC 15123 / Z-1320) (Anaerocellum thermophilum).